Reading from the N-terminus, the 338-residue chain is Ketol-acid reductoisomerase (NADP(+)) (338 aa).

One can recognise a KARI N-terminal Rossmann domain in the interval 1–181 (MKVFYDKDCD…GGGRAGIIET (181 aa)). Residues 24-27 (YGSQ), Arg47, and Ser52 each bind NADP(+). Residue His107 is part of the active site. Gly133 contributes to the NADP(+) binding site. The 146-residue stretch at 182–327 (NFREETETDL…GKLRAMMPWI (146 aa)) folds into the KARI C-terminal knotted domain. Mg(2+)-binding residues include Asp190, Glu194, Glu226, and Glu230. Ser251 serves as a coordination point for substrate.

The protein belongs to the ketol-acid reductoisomerase family. Mg(2+) is required as a cofactor.

It carries out the reaction (2R)-2,3-dihydroxy-3-methylbutanoate + NADP(+) = (2S)-2-acetolactate + NADPH + H(+). The catalysed reaction is (2R,3R)-2,3-dihydroxy-3-methylpentanoate + NADP(+) = (S)-2-ethyl-2-hydroxy-3-oxobutanoate + NADPH + H(+). It participates in amino-acid biosynthesis; L-isoleucine biosynthesis; L-isoleucine from 2-oxobutanoate: step 2/4. The protein operates within amino-acid biosynthesis; L-valine biosynthesis; L-valine from pyruvate: step 2/4. Its function is as follows. Involved in the biosynthesis of branched-chain amino acids (BCAA). Catalyzes an alkyl-migration followed by a ketol-acid reduction of (S)-2-acetolactate (S2AL) to yield (R)-2,3-dihydroxy-isovalerate. In the isomerase reaction, S2AL is rearranged via a Mg-dependent methyl migration to produce 3-hydroxy-3-methyl-2-ketobutyrate (HMKB). In the reductase reaction, this 2-ketoacid undergoes a metal-dependent reduction by NADPH to yield (R)-2,3-dihydroxy-isovalerate. In Bordetella bronchiseptica (strain ATCC BAA-588 / NCTC 13252 / RB50) (Alcaligenes bronchisepticus), this protein is Ketol-acid reductoisomerase (NADP(+)).